The primary structure comprises 149 residues: Golgi apparatus membrane protein tvp-18 (149 aa).

An N-linked (GlcNAc...) asparagine glycan is attached at asparagine 11. Transmembrane regions (helical) follow at residues 18 to 38 (WLGI…IFTF), 41 to 61 (IIIV…FVEV), 84 to 103 (NYTR…LSCI), and 108 to 128 (SLLV…LAAL).

It belongs to the TVP18 family.

The protein resides in the golgi apparatus membrane. Functionally, golgi membrane protein involved in vesicular trafficking. The chain is Golgi apparatus membrane protein tvp-18 (tvp-18) from Neurospora crassa (strain ATCC 24698 / 74-OR23-1A / CBS 708.71 / DSM 1257 / FGSC 987).